A 509-amino-acid polypeptide reads, in one-letter code: 2-isopropylmalate synthase (509 aa).

The Pyruvate carboxyltransferase domain occupies 5 to 267 (IQIFDTTLRD…QTALNLEETK (263 aa)). Mn(2+)-binding residues include D14, H202, H204, and N238. Positions 391 to 509 (KLETLQLQYV…AAENVEKVGN (119 aa)) are regulatory domain.

Belongs to the alpha-IPM synthase/homocitrate synthase family. LeuA type 1 subfamily. Homodimer. The cofactor is Mn(2+).

The protein resides in the cytoplasm. The catalysed reaction is 3-methyl-2-oxobutanoate + acetyl-CoA + H2O = (2S)-2-isopropylmalate + CoA + H(+). Its pathway is amino-acid biosynthesis; L-leucine biosynthesis; L-leucine from 3-methyl-2-oxobutanoate: step 1/4. Its function is as follows. Catalyzes the condensation of the acetyl group of acetyl-CoA with 3-methyl-2-oxobutanoate (2-ketoisovalerate) to form 3-carboxy-3-hydroxy-4-methylpentanoate (2-isopropylmalate). The sequence is that of 2-isopropylmalate synthase from Staphylococcus aureus (strain USA300).